The primary structure comprises 661 residues: Junctophilin-1 (661 aa).

The Cytoplasmic segment spans residues 1–639; sequence MTGGRFDFDD…EKEANSGPNS (639 aa). MORN repeat units lie at residues 14–36, 38–59, 60–82, 106–128, and 129–151; these read YCGGWEEGKAHGHGICTGPKGQG, YSGSWSHGFEVVGGYTWPSGNT, YQGYWAQGKRHGLGVETKGKWMY, YEGTWSNGLQDGYGVETYGDGGT, and YQGQWAGGMRHGYGVRQSVPYGM. Residues S157, S216, and S220 each carry the phosphoserine modification. The segment at 228 to 247 is disordered; the sequence is SKSSISSKRSSVRSDAAMSR. MORN repeat units follow at residues 281–303 and 304–326; these read YMGEWKNDKRNGFGVSERSNGMK and YEGEWANNKRHGYGCTVFPDGSK. Residues 433 to 454 are compositionally biased toward basic and acidic residues; it reads DAKENPEEKVPEKPPTPKESPH. The segment at 433–631 is disordered; sequence DAKENPEEKV…SNDSCPALEK (199 aa). At T448 the chain carries Phosphothreonine. The residue at position 452 (S452) is a Phosphoserine. Residue T461 is modified to Phosphothreonine. S465, S469, and S475 each carry phosphoserine. A compositionally biased stretch (basic and acidic residues) spans 599 to 613; the sequence is VAKESKAEPKAKKSE. The chain crosses the membrane as a helical; Anchor for type IV membrane protein span at residues 640–660; it reads IMIVLVMLLNIGLAILFVHFL.

Belongs to the junctophilin family. As to expression, abundantly expressed in skeletal muscle. Very low levels in heart.

Its subcellular location is the cell membrane. The protein resides in the endoplasmic reticulum membrane. It is found in the sarcoplasmic reticulum membrane. Its function is as follows. Junctophilins contribute to the formation of junctional membrane complexes (JMCs) which link the plasma membrane with the endoplasmic or sarcoplasmic reticulum in excitable cells. Provides a structural foundation for functional cross-talk between the cell surface and intracellular calcium release channels. JPH1 contributes to the construction of the skeletal muscle triad by linking the t-tubule (transverse-tubule) and SR (sarcoplasmic reticulum) membranes. The sequence is that of Junctophilin-1 (JPH1) from Homo sapiens (Human).